The chain runs to 2844 residues: Sodium channel protein 60E (2844 aa).

Over 1-121 (MSDDQATFND…WSPARRVCVY (121 aa)) the chain is Cytoplasmic. The stretch at 107-434 (FLFYPWSPAR…FDPSVLNVKK (328 aa)) is one I repeat. Residues 122-145 (IATNQFFDYCVMATILFNCIFLAM) traverse the membrane as a helical segment. Topologically, residues 146–151 (TETVEE) are extracellular. Residues 152 to 172 (AEYIFLAIYSIEMVIKIIAKG) form a helical membrane-spanning segment. At 173-183 (FLLNKYTYLRN) the chain is on the cytoplasmic side. Residues 184-202 (PWNWLDFVVITSGYATIGM) traverse the membrane as a helical segment. The Extracellular portion of the chain corresponds to 203 to 208 (EVGNLA). A helical; Voltage-sensor membrane pass occupies residues 209 to 228 (GLRTFRVLRALKTVSIMPGL). Over 229–244 (KTIINALLHSFRQLAE) the chain is Cytoplasmic. A helical membrane pass occupies residues 245-265 (VMTLTIFCLMVFALFALQVYM). At 266–340 (GELRNKCVRQ…PNHGYTNFDN (75 aa)) the chain is on the extracellular side. Residues cysteine 272 and cysteine 318 are joined by a disulfide bond. N-linked (GlcNAc...) asparagine glycosylation is found at asparagine 282, asparagine 293, and asparagine 311. The segment at residues 341-365 (FMWSMLTTFQLITLDYWENVYNMVL) is an intramembrane region (pore-forming). The Extracellular segment spans residues 366-374 (ATCGPMSVS). A helical membrane pass occupies residues 375–395 (FFTVVVFFGSFYLINLMLAVV). The Cytoplasmic portion of the chain corresponds to 396 to 687 (ALSYEEEAEI…QNCLYKVVRD (292 aa)). The interval 452 to 610 (ASYSKKKTRR…QDTTNDMGHV (159 aa)) is disordered. Residues 455-465 (SKKKTRRKKTK) show a composition bias toward basic residues. The segment covering 469 to 479 (EGGTNGNGNGS) has biased composition (gly residues). 2 stretches are compositionally biased toward low complexity: residues 511-520 (QAQKQYQQME) and 577-586 (SSNSSGVNRE). Residues 593-603 (GVVDDHEEQDT) are compositionally biased toward acidic residues. The stretch at 668-1130 (CTDYESWLQF…ESIELLGQYN (463 aa)) is one II repeat. The helical transmembrane segment at 688 to 708 (PLFELAITLCIVLNTAFLAME) threads the bilayer. Residues 709-718 (HHGMSESFRN) lie on the Extracellular side of the membrane. A helical membrane pass occupies residues 719–743 (ALDVGNKVFTSIFTFECIVKLMALS). The Cytoplasmic segment spans residues 744–749 (KDFFLC). A helical membrane pass occupies residues 750–769 (GWNIFDLLIVTASLLDIIFE). Residues 770 to 775 (LVDGLS) are Extracellular-facing. The helical; Voltage-sensor transmembrane segment at 776–795 (VLRGLRLLRVLKLAQSWTTM) threads the bilayer. The Cytoplasmic segment spans residues 796–810 (KVLLSIIISTIGALG). Residues 811 to 832 (NLTLILVIVIYIFAVIGMQLFS) traverse the membrane as a helical segment. At 833–852 (KDYTPEKFDPDPVPRWNFND) the chain is on the extracellular side. Positions 853–873 (FFHSFMMIFRILCGEWIEPLW) form an intramembrane region, pore-forming. The Extracellular portion of the chain corresponds to 874-889 (DCMRAEEEQGASTCFA). Cysteine 875 and cysteine 887 are disulfide-bonded. Residues 890–910 (IFLPTLVMGNFMVLNLFLALL) traverse the membrane as a helical segment. The Cytoplasmic segment spans residues 911 to 1742 (LNSFNSEELK…SAKHWTRVRT (832 aa)). Positions 1129 to 1157 (YNSTDTDPYANDQRSGCGSFNRGDSLQDN) are enriched in polar residues. Disordered stretches follow at residues 1129–1166 (YNST…GSEE), 1185–1224 (YRKS…NSMS), 1268–1288 (ISNV…ENET), 1577–1630 (APTP…ADAS), and 1635–1654 (LAMA…ATQK). Residues 1191 to 1203 (RLSQSSGQSQRSL) show a composition bias toward low complexity. A compositionally biased stretch (basic and acidic residues) spans 1204 to 1213 (LKSEEAEMRR). Polar residues-rich tracts occupy residues 1277-1286 (PSSQMGQPEN), 1604-1618 (PQST…QSAR), and 1640-1654 (KTEQ…ATQK). The stretch at 1723–2040 (PWFMSCMDTQ…QKHYYTAMKK (318 aa)) is one III repeat. Residues 1743–1763 (AVLTVVDTPAFEWFVLVLIFA) form a helical membrane-spanning segment. Residues 1764-1789 (SSITLCFEDINLDKNKTLKRVLYWIN) lie on the Extracellular side of the membrane. N-linked (GlcNAc...) asparagine glycosylation is found at asparagine 1778 and asparagine 1789. A helical membrane pass occupies residues 1790 to 1810 (FSFCLIFVVEMILKWLALGFS). Residues 1811–1813 (KYF) lie on the Cytoplasmic side of the membrane. Residues 1814–1834 (TSFWTILDFIIVFVSVFSLLI) form a helical membrane-spanning segment. At 1835–1839 (EENEN) the chain is on the extracellular side. Residues 1840 to 1861 (LKVLRSLRTLRALRPLRAISRW) traverse the membrane as a helical; Voltage-sensor segment. Residues 1862–1880 (QGMRIVVNALMYAIPSIFN) are Cytoplasmic-facing. A helical membrane pass occupies residues 1881–1902 (VLLVCLVFWLIFSIMGVQFFGG). The Extracellular portion of the chain corresponds to 1903-1943 (KFFKCVNEMGELLPITEVNDKWDCIEQNYTWINSKITFDHV). N-linked (GlcNAc...) asparagine glycosylation is present at asparagine 1930. The segment at residues 1944–1965 (GMGYLALLQVATFEGWMEVMAD) is an intramembrane region (pore-forming). The Extracellular segment spans residues 1966–1981 (AVDARGVDLQPQREAN). Residues 1982–2002 (LYAYIYFVIFIVCGSFFTLNL) traverse the membrane as a helical segment. Residues 2003-2069 (FIGVIIDNFN…MFYDLSNSRR (67 aa)) lie on the Cytoplasmic side of the membrane. The stretch at 2050–2311 (IKRPINHFLA…NMYIAIILEN (262 aa)) is one IV repeat. A helical membrane pass occupies residues 2070 to 2090 (FEIAIFVLIFLNMLTMGIEHY). The Extracellular segment spans residues 2091 to 2095 (DQPHA). The helical transmembrane segment at 2096-2116 (VFFILEVSNAFFTTVFGLEAI) threads the bilayer. At 2117 to 2132 (VKIVGLRYHYFTVPWN) the chain is on the cytoplasmic side. Residues 2133–2153 (VFDFLLVLASIFGILMEDIMI) form a helical membrane-spanning segment. Topologically, residues 2154-2162 (DLPISPTLL) are extracellular. The helical; Voltage-sensor transmembrane segment at 2163-2184 (RVVRVFRIGRILRLIKAAKGIR) threads the bilayer. Topologically, residues 2185 to 2199 (KLLFALVVSLPALFN) are cytoplasmic. The helical transmembrane segment at 2200 to 2220 (IGALLGLITFIYAILGMSLFG) threads the bilayer. Residues 2221–2236 (NVKLQGALDDMVNFQT) are Extracellular-facing. Residues 2237-2259 (FGRSMQLLFRLMTSAGWNDVLES) constitute an intramembrane region (pore-forming). The Extracellular portion of the chain corresponds to 2260-2288 (LMIQPPDCDPFIHGHTNGNCGHPLLAITY). A helical membrane pass occupies residues 2289-2309 (FTSFIIISYMIVINMYIAIIL). The Cytoplasmic portion of the chain corresponds to 2310–2844 (ENFNQAHQEE…QFESLPDRQR (535 aa)). One can recognise an IQ domain in the interval 2441–2470 (QEKAAKTIQTGWKEYLRRKREKERSNSGDS). Disordered stretches follow at residues 2457 to 2479 (RRKR…SPGG), 2584 to 2668 (SLTS…LSAQ), 2780 to 2802 (DSPK…GAPI), and 2818 to 2844 (NPEK…DRQR). The segment covering 2467 to 2479 (SGDSATQTSSPGG) has biased composition (polar residues). The span at 2595–2632 (AMNNTTNTTSNSASTSGTASSTATAPATGCGPAATSAS) shows a compositional bias: low complexity. Positions 2647–2658 (SRKRASSFIRKK) are enriched in basic residues. A compositionally biased stretch (polar residues) spans 2825 to 2836 (DQGNGQDETAQF).

It belongs to the sodium channel (TC 1.A.1.10) family. NaCP60E subfamily. As to expression, in embryonic and larval stages, expression is limited to very few non-neuronal cells in either the CNS or PNS. In pupal and adult stages, expressed in cell bodies of the fly central nervous system, including optic lobes, central brain, subesophageal ganglion, thoracico-abdominal ganglion, major olfactory organs, the third antennal segment and the maxillary palps.

The protein localises to the cell membrane. Its function is as follows. Mediates the voltage-dependent sodium ion permeability of excitable membranes. Plays a role in processing of olfactory information during the olfactory avoidance response. This Drosophila melanogaster (Fruit fly) protein is Sodium channel protein 60E (NaCP60E).